The following is a 284-amino-acid chain: NAD kinase (284 aa).

Asp71 serves as the catalytic Proton acceptor. Residues 71 to 72 (DG), 144 to 145 (ND), Asp174, 185 to 190 (TAYNLS), and Gln242 contribute to the NAD(+) site.

It belongs to the NAD kinase family. A divalent metal cation serves as cofactor.

It is found in the cytoplasm. The catalysed reaction is NAD(+) + ATP = ADP + NADP(+) + H(+). Involved in the regulation of the intracellular balance of NAD and NADP, and is a key enzyme in the biosynthesis of NADP. Catalyzes specifically the phosphorylation on 2'-hydroxyl of the adenosine moiety of NAD to yield NADP. This is NAD kinase from Sulfurimonas denitrificans (strain ATCC 33889 / DSM 1251) (Thiomicrospira denitrificans (strain ATCC 33889 / DSM 1251)).